The sequence spans 876 residues: MSKSTAEIRQAFLDFFHSKGHQVVASSSLVPNNDPTLLFTNAGMNQFKDVFLGLDKRNYSRATTSQRCVRAGGKHNDLENVGYTARHHTFFEMLGNFSFGDYFKHDAIQFAWELLTGENWFALPKERLWVTVYETDDEAYEIWEKEVGIPRERIIRIGDNKGAPYASDNFWQMGDTGPCGPCTEIFYDHGDHIWGGPPGSPEEDGDRYIEIWNIVFMQFNRQADGTMEPLPKPSVDTGMGLERIAAVLQHVNSNYDIDLFRTLIEAVAKVTGSTDLGNKSLRVIADHIRSCAFLVADGVLPSNENRGYVLRRIIRRAVRHGNMLGAKETFFYKLVGPLIEVMGSAGEELKRQQAQVEQVLKTEEEQFARTLERGLALLDEELAKLQGDTLDGETAFRLYDTYGFPVDLTADVCRERNIKVDEAGFEAAMEEQRRRAREASGFGADYNAMIRVDSASEFKGYDHLELNGKVTALFVDGKAVEAINAGQEAVVVLDQTPFYAESGGQVGDKGELKGAGFTFAVDDTQKYGQAIGHLGKLSAGALKVGDAVQADVDEARRARIRLNHSATHLMHAALRQVLGTHVAQKGSLVSDKVLRFDFSHNEAMKPSEIREVEDLVNAQIRRNLPIETNIMDLDAAKAKGAMALFGEKYDERVRVLSMGDFSTELCGGTHASRTGDIGLFRIISESGTAAGIRRIEAVTGEGAMATVHAQSDRLNDIAHLLKGDSQNLGDKVRAVLERTRQLEKELQQLKDQAAAQESANLSSKAVDLNGVKLLVSELAGIEPKMLRTMVDDLKNQLGSTVIVLATVVEGKVSLIAGVSKDVTDRVKAGELIGMVAQQVGGKGGGRPDMAQAGGTDAAALPAALASVQGWVSAKLQ.

4 residues coordinate Zn(2+): His-564, His-568, Cys-666, and His-670.

This sequence belongs to the class-II aminoacyl-tRNA synthetase family. In terms of assembly, homotetramer. Zn(2+) is required as a cofactor.

Its subcellular location is the cytoplasm. It catalyses the reaction tRNA(Ala) + L-alanine + ATP = L-alanyl-tRNA(Ala) + AMP + diphosphate. Functionally, catalyzes the attachment of alanine to tRNA(Ala) in a two-step reaction: alanine is first activated by ATP to form Ala-AMP and then transferred to the acceptor end of tRNA(Ala). Also edits incorrectly charged Ser-tRNA(Ala) and Gly-tRNA(Ala) via its editing domain. In Salmonella typhi, this protein is Alanine--tRNA ligase.